The following is a 220-amino-acid chain: Deoxyribose-phosphate aldolase 1 (220 aa).

The active-site Proton donor/acceptor is D89. K151 (schiff-base intermediate with acetaldehyde) is an active-site residue. The Proton donor/acceptor role is filled by K180.

The protein belongs to the DeoC/FbaB aldolase family. DeoC type 1 subfamily.

The protein resides in the cytoplasm. The catalysed reaction is 2-deoxy-D-ribose 5-phosphate = D-glyceraldehyde 3-phosphate + acetaldehyde. Its pathway is carbohydrate degradation; 2-deoxy-D-ribose 1-phosphate degradation; D-glyceraldehyde 3-phosphate and acetaldehyde from 2-deoxy-alpha-D-ribose 1-phosphate: step 2/2. In terms of biological role, catalyzes a reversible aldol reaction between acetaldehyde and D-glyceraldehyde 3-phosphate to generate 2-deoxy-D-ribose 5-phosphate. The chain is Deoxyribose-phosphate aldolase 1 from Staphylococcus aureus (strain bovine RF122 / ET3-1).